The sequence spans 413 residues: Protein PHR1-LIKE 1 (413 aa).

Disordered regions lie at residues 171–196 and 208–233; these read SEPNWSELLGDSSSHNPNSEIPTPFL and QQQMVSSEDQLSGRNSSSSVATSKQR. Polar residues-rich tracts occupy residues 181–191 and 208–231; these read DSSSHNPNSEI and QQQMVSSEDQLSGRNSSSSVATSK. In terms of domain architecture, HTH myb-type spans 228-288; sequence ATSKQRMRWT…HLQKYRTARY (61 aa). Residues 259 to 284 constitute a DNA-binding region (H-T-H motif); it reads PKAVLKLLNNPGLTIYHVKSHLQKYR. A coiled coil region spans residues 322–342; sequence TQALRLQMEVQKRLHEQLEIQ. The LHEQLE motif lies at 335–340; that stretch reads LHEQLE. The interval 363-413 is disordered; the sequence is QQKIQDNKSSSSEASPKQCNGSFAEVEVGLETLTGDQNESASASRKRVRED. Polar residues-rich tracts occupy residues 369–383 and 396–405; these read NKSSSSEASPKQCNG and TGDQNESASA.

The protein belongs to the MYB-CC family. Homodimers and heterodimers. Interacts with MED25. Does not interact with PHL2 or PHL3. In terms of tissue distribution, expressed in shoots and roots.

It is found in the nucleus. Its function is as follows. Transcription factor acting as central integrator of phosphate starvation responses. Regulates FER1 expression upon phosphate starvation, linking iron and phosphate homeostasis. The polypeptide is Protein PHR1-LIKE 1 (PHL1) (Arabidopsis thaliana (Mouse-ear cress)).